A 565-amino-acid polypeptide reads, in one-letter code: Galactoside 2-alpha-L-fucosyltransferase (565 aa).

The Cytoplasmic portion of the chain corresponds to 1–43 (MNMLIKRVIAIKNPRGDDNNNNKLSDLETLTDKCTTCPLTLMR). A helical; Signal-anchor for type II membrane protein membrane pass occupies residues 44-64 (VMAFFVVSFMLFSVLFSLSVV). At 65 to 565 (LRDPPSDAAI…MSWGLKLVDN (501 aa)) the chain is on the lumenal side. Residues Asn-159, Asn-263, Asn-407, and Asn-509 are each glycosylated (N-linked (GlcNAc...) asparagine).

Belongs to the glycosyltransferase 37 family.

It localises to the golgi apparatus. The protein resides in the golgi stack membrane. It participates in protein modification; protein glycosylation. In terms of biological role, involved in cell wall biosynthesis. Adds the terminal fucosyl residue on xyloglucan side chains. The sequence is that of Galactoside 2-alpha-L-fucosyltransferase (FT1) from Pisum sativum (Garden pea).